The primary structure comprises 120 residues: Glycine cleavage system H protein (120 aa).

A Lipoyl-binding domain is found at 20-102 (DGTVGISDHA…YEGGWLFKLD (83 aa)). Lysine 61 carries the N6-lipoyllysine modification.

It belongs to the GcvH family. The glycine cleavage system is composed of four proteins: P, T, L and H. It depends on (R)-lipoate as a cofactor.

The glycine cleavage system catalyzes the degradation of glycine. The H protein shuttles the methylamine group of glycine from the P protein to the T protein. This Deinococcus radiodurans (strain ATCC 13939 / DSM 20539 / JCM 16871 / CCUG 27074 / LMG 4051 / NBRC 15346 / NCIMB 9279 / VKM B-1422 / R1) protein is Glycine cleavage system H protein.